A 372-amino-acid polypeptide reads, in one-letter code: Rab9 effector protein with kelch motifs (372 aa).

Kelch repeat units lie at residues 49–95, 100–146, 151–200, 204–250, and 254–303; these read KVFI…FIPS, RIWV…TSSA, QLYV…VMVA, KLFI…SAVA, and HVYI…IIPW. Ser-133 carries the post-translational modification Phosphoserine. The tract at residues 314-340 is disordered; it reads SNSLTLNHEAEKEDSADKVMSHSGDSH. Residues 321-340 are compositionally biased toward basic and acidic residues; sequence HEAEKEDSADKVMSHSGDSH.

Interacts with PIKFYVE; the interaction recruits RABEPK to the endosomal membrane. Interacts with RAB9 in its GTP-bound conformation. Post-translationally, phosphorylated on Ser residues by PIKFYVE.

The protein resides in the cytoplasm. It is found in the endosome membrane. In terms of biological role, rab9 effector required for endosome to trans-Golgi network (TGN) transport. This chain is Rab9 effector protein with kelch motifs, found in Homo sapiens (Human).